The primary structure comprises 387 residues: tRNA-specific 2-thiouridylase MnmA (387 aa).

Residues 34-41 and methionine 60 contribute to the ATP site; that span reads AMSGGVDS. Cysteine 127 acts as the Nucleophile in catalysis. A disulfide bridge connects residues cysteine 127 and cysteine 223. Glycine 151 serves as a coordination point for ATP. The segment at 173–175 is interaction with tRNA; the sequence is KDQ. The active-site Cysteine persulfide intermediate is the cysteine 223.

This sequence belongs to the MnmA/TRMU family.

It localises to the cytoplasm. The catalysed reaction is S-sulfanyl-L-cysteinyl-[protein] + uridine(34) in tRNA + AH2 + ATP = 2-thiouridine(34) in tRNA + L-cysteinyl-[protein] + A + AMP + diphosphate + H(+). Catalyzes the 2-thiolation of uridine at the wobble position (U34) of tRNA, leading to the formation of s(2)U34. The chain is tRNA-specific 2-thiouridylase MnmA from Anaplasma marginale (strain St. Maries).